A 204-amino-acid chain; its full sequence is CASP-like protein 1U3 (204 aa).

Residues 1–19 lie on the Cytoplasmic side of the membrane; that stretch reads MCEGEKKKDSSSGALYCVN. Residues 20-40 form a helical membrane-spanning segment; that stretch reads LALRIVVLGLAVAAAALMATA. The Extracellular segment spans residues 41–63; sequence SQCTIFLYYGGPLHTITYKDFGP. A helical membrane pass occupies residues 64–84; the sequence is FVYLVVASSIGAFMEAIAIFL. The Cytoplasmic portion of the chain corresponds to 85-97; that stretch reads TICKKKDGTPAKV. Residues 98–118 form a helical membrane-spanning segment; the sequence is LLPLLDAAVPVLLYSATAAAF. The Extracellular portion of the chain corresponds to 119–146; sequence AAGDMSYCAVGKRVGVCTTAAAGNFCNQ. Residues 147–167 form a helical membrane-spanning segment; it reads VHIAMYVSLAAGVALLVAEIV. Residues 168–204 lie on the Cytoplasmic side of the membrane; that stretch reads KHWPDSGKKKEGGGGGCGSDSDSDKSTPCHHGCHSKH. The disordered stretch occupies residues 173-204; it reads SGKKKEGGGGGCGSDSDSDKSTPCHHGCHSKH.

This sequence belongs to the Casparian strip membrane proteins (CASP) family. As to quaternary structure, homodimer and heterodimers.

Its subcellular location is the cell membrane. This chain is CASP-like protein 1U3, found in Oryza sativa subsp. japonica (Rice).